A 287-amino-acid polypeptide reads, in one-letter code: Phosphatidylserine decarboxylase proenzyme (287 aa).

Residues Asp89, His146, and Ser252 each act as charge relay system; for autoendoproteolytic cleavage activity in the active site. Ser252 acts as the Schiff-base intermediate with substrate; via pyruvic acid; for decarboxylase activity in catalysis. Position 252 is a pyruvic acid (Ser); by autocatalysis (Ser252).

It belongs to the phosphatidylserine decarboxylase family. PSD-B subfamily. Prokaryotic type I sub-subfamily. Heterodimer of a large membrane-associated beta subunit and a small pyruvoyl-containing alpha subunit. Pyruvate serves as cofactor. In terms of processing, is synthesized initially as an inactive proenzyme. Formation of the active enzyme involves a self-maturation process in which the active site pyruvoyl group is generated from an internal serine residue via an autocatalytic post-translational modification. Two non-identical subunits are generated from the proenzyme in this reaction, and the pyruvate is formed at the N-terminus of the alpha chain, which is derived from the carboxyl end of the proenzyme. The autoendoproteolytic cleavage occurs by a canonical serine protease mechanism, in which the side chain hydroxyl group of the serine supplies its oxygen atom to form the C-terminus of the beta chain, while the remainder of the serine residue undergoes an oxidative deamination to produce ammonia and the pyruvoyl prosthetic group on the alpha chain. During this reaction, the Ser that is part of the protease active site of the proenzyme becomes the pyruvoyl prosthetic group, which constitutes an essential element of the active site of the mature decarboxylase.

The protein resides in the cell membrane. It catalyses the reaction a 1,2-diacyl-sn-glycero-3-phospho-L-serine + H(+) = a 1,2-diacyl-sn-glycero-3-phosphoethanolamine + CO2. It participates in phospholipid metabolism; phosphatidylethanolamine biosynthesis; phosphatidylethanolamine from CDP-diacylglycerol: step 2/2. Catalyzes the formation of phosphatidylethanolamine (PtdEtn) from phosphatidylserine (PtdSer). The sequence is that of Phosphatidylserine decarboxylase proenzyme from Shewanella sediminis (strain HAW-EB3).